The chain runs to 283 residues: Foldase protein PrsA 3 (283 aa).

An N-terminal signal peptide occupies residues Met1–Ala21. A lipid anchor (N-palmitoyl cysteine) is attached at Cys22. Cys22 carries S-diacylglycerol cysteine lipidation. The PpiC domain occupies Lys132 to Asp222.

Belongs to the PrsA family.

The protein localises to the cell membrane. It carries out the reaction [protein]-peptidylproline (omega=180) = [protein]-peptidylproline (omega=0). Plays a major role in protein secretion by helping the post-translocational extracellular folding of several secreted proteins. Important for the secretion of the protective antigen. The three PsrA proteins in this organism show different but overlapping substrate specificities. This Bacillus anthracis protein is Foldase protein PrsA 3 (prsA3).